A 908-amino-acid chain; its full sequence is Protein translocase subunit SecA (908 aa).

ATP-binding positions include Q87, G105–T109, and D507. The segment at E860–K898 is disordered. 4 residues coordinate Zn(2+): C892, C894, C903, and H904.

The protein belongs to the SecA family. As to quaternary structure, monomer and homodimer. Part of the essential Sec protein translocation apparatus which comprises SecA, SecYEG and auxiliary proteins SecDF-YajC and YidC. Requires Zn(2+) as cofactor.

It localises to the cell inner membrane. The protein resides in the cytoplasm. The catalysed reaction is ATP + H2O + cellular proteinSide 1 = ADP + phosphate + cellular proteinSide 2.. Functionally, part of the Sec protein translocase complex. Interacts with the SecYEG preprotein conducting channel. Has a central role in coupling the hydrolysis of ATP to the transfer of proteins into and across the cell membrane, serving both as a receptor for the preprotein-SecB complex and as an ATP-driven molecular motor driving the stepwise translocation of polypeptide chains across the membrane. This chain is Protein translocase subunit SecA, found in Methylobacillus flagellatus (strain ATCC 51484 / DSM 6875 / VKM B-1610 / KT).